We begin with the raw amino-acid sequence, 286 residues long: 4-hydroxybenzoate octaprenyltransferase (286 aa).

A run of 7 helical transmembrane segments spans residues 21–40, 96–116, 142–162, 167–187, 210–230, 235–255, and 266–286; these read GTLL…AGGM, LFVI…GLVV, FLGV…TGEV, WWLF…YAMV, QIIG…GWSA, LYGL…MLIF, and FLNN…DYLF.

Belongs to the UbiA prenyltransferase family. Requires Mg(2+) as cofactor.

Its subcellular location is the cell inner membrane. It catalyses the reaction all-trans-octaprenyl diphosphate + 4-hydroxybenzoate = 4-hydroxy-3-(all-trans-octaprenyl)benzoate + diphosphate. It participates in cofactor biosynthesis; ubiquinone biosynthesis. Its function is as follows. Catalyzes the prenylation of para-hydroxybenzoate (PHB) with an all-trans polyprenyl group. Mediates the second step in the final reaction sequence of ubiquinone-8 (UQ-8) biosynthesis, which is the condensation of the polyisoprenoid side chain with PHB, generating the first membrane-bound Q intermediate 3-octaprenyl-4-hydroxybenzoate. The protein is 4-hydroxybenzoate octaprenyltransferase of Shewanella sp. (strain MR-4).